The chain runs to 349 residues: Methionine import ATP-binding protein MetN (349 aa).

The ABC transporter domain maps to isoleucine 5 to valine 245. ATP is bound at residue glycine 37–serine 44.

The protein belongs to the ABC transporter superfamily. Methionine importer (TC 3.A.1.24) family. As to quaternary structure, the complex is composed of two ATP-binding proteins (MetN), two transmembrane proteins (MetI) and a solute-binding protein (MetQ).

The protein resides in the cell membrane. The enzyme catalyses L-methionine(out) + ATP + H2O = L-methionine(in) + ADP + phosphate + H(+). It catalyses the reaction D-methionine(out) + ATP + H2O = D-methionine(in) + ADP + phosphate + H(+). Functionally, part of the ABC transporter complex MetNIQ involved in methionine import. Responsible for energy coupling to the transport system. The chain is Methionine import ATP-binding protein MetN from Lactobacillus johnsonii (strain CNCM I-12250 / La1 / NCC 533).